The following is a 62-amino-acid chain: UPF0434 protein RHECIAT_CH0004260 (62 aa).

This sequence belongs to the UPF0434 family.

This is UPF0434 protein RHECIAT_CH0004260 from Rhizobium etli (strain CIAT 652).